Here is a 242-residue protein sequence, read N- to C-terminus: Sugar fermentation stimulation protein homolog (242 aa).

The protein belongs to the SfsA family.

This chain is Sugar fermentation stimulation protein homolog, found in Rippkaea orientalis (strain PCC 8801 / RF-1) (Cyanothece sp. (strain PCC 8801)).